Consider the following 212-residue polypeptide: MNSQQCVIIAIAGASASGKSLIAKTIFDELRRDLGTDQIGVINEDAYYRDQSHLSMDERVLTNYDHPKALDHQLLCTHLQLLKSGEAVDIPCYSYTEHTRTADTVTMTPKKVIILEGILLLTDPKLRELMDASVFMDTPLDICFLRRLTRDVAERGRTMESVISQYKKTVRPMFLQFIEPSKQYADIIVPRGGKNRIATDILKTRIQHLLAK.

13–20 (GASASGKS) lines the ATP pocket.

The protein belongs to the uridine kinase family.

It is found in the cytoplasm. It carries out the reaction uridine + ATP = UMP + ADP + H(+). The catalysed reaction is cytidine + ATP = CMP + ADP + H(+). It functions in the pathway pyrimidine metabolism; CTP biosynthesis via salvage pathway; CTP from cytidine: step 1/3. It participates in pyrimidine metabolism; UMP biosynthesis via salvage pathway; UMP from uridine: step 1/1. The chain is Uridine kinase from Shewanella putrefaciens (strain CN-32 / ATCC BAA-453).